We begin with the raw amino-acid sequence, 248 residues long: Enolase-phosphatase E1 (248 aa).

Mg(2+) contacts are provided by Asp14 and Glu16. Residues 145–146 (SS) and Lys179 each bind substrate. Asp204 contributes to the Mg(2+) binding site.

The protein belongs to the HAD-like hydrolase superfamily. MasA/MtnC family. In terms of assembly, monomer. The cofactor is Mg(2+).

The protein localises to the cytoplasm. It localises to the nucleus. The catalysed reaction is 5-methylsulfanyl-2,3-dioxopentyl phosphate + H2O = 1,2-dihydroxy-5-(methylsulfanyl)pent-1-en-3-one + phosphate. It participates in amino-acid biosynthesis; L-methionine biosynthesis via salvage pathway; L-methionine from S-methyl-5-thio-alpha-D-ribose 1-phosphate: step 3/6. Its pathway is amino-acid biosynthesis; L-methionine biosynthesis via salvage pathway; L-methionine from S-methyl-5-thio-alpha-D-ribose 1-phosphate: step 4/6. Functionally, bifunctional enzyme that catalyzes the enolization of 2,3-diketo-5-methylthiopentyl-1-phosphate (DK-MTP-1-P) into the intermediate 2-hydroxy-3-keto-5-methylthiopentenyl-1-phosphate (HK-MTPenyl-1-P), which is then dephosphorylated to form the acireductone 1,2-dihydroxy-3-keto-5-methylthiopentene (DHK-MTPene). This chain is Enolase-phosphatase E1, found in Caenorhabditis elegans.